A 457-amino-acid polypeptide reads, in one-letter code: Multidrug resistance protein MdtK (457 aa).

12 helical membrane passes run 11 to 31, 53 to 73, 93 to 113, 127 to 147, 160 to 180, 188 to 208, 243 to 263, 276 to 296, 314 to 334, 350 to 370, 387 to 407, and 418 to 438; these read LLAL…MGFV, IWLP…PVIA, WLAG…GYII, AVGY…FQVA, GMVM…IFIY, LGGI…FIAM, LPIA…ALLV, IALN…AAVT, AART…IFTV, VVAL…SDSI, IFFI…YILA, and PAGF…LMML.

Belongs to the multi antimicrobial extrusion (MATE) (TC 2.A.66.1) family. MdtK subfamily.

Its subcellular location is the cell inner membrane. Functionally, multidrug efflux pump that functions probably as a Na(+)/drug antiporter. The protein is Multidrug resistance protein MdtK of Salmonella heidelberg (strain SL476).